Consider the following 317-residue polypeptide: NADPH-dependent D-xylose reductase (317 aa).

The Proton donor role is filled by tyrosine 47. Residue histidine 109 coordinates substrate. NADP(+)-binding positions include 164 to 165, 213 to 222, and 269 to 279; these read SN, SSFGPQSFVE, and KSNNPDRLLSN.

Belongs to the aldo/keto reductase family.

It catalyses the reaction xylitol + NAD(+) = D-xylose + NADH + H(+). It carries out the reaction xylitol + NADP(+) = D-xylose + NADPH + H(+). Its pathway is carbohydrate metabolism; D-xylose degradation. Its function is as follows. Reduces D-xylose into xylitol. Preferentially utilizes NADPH as a cosubstrate. This is NADPH-dependent D-xylose reductase (XYL1) from Meyerozyma guilliermondii (strain ATCC 6260 / CBS 566 / DSM 6381 / JCM 1539 / NBRC 10279 / NRRL Y-324) (Yeast).